A 201-amino-acid chain; its full sequence is Large ribosomal subunit protein uL4 (201 aa).

A disordered region spans residues 44 to 68 (KAQKTRSEVAGTTKKSKKQKGGGAR).

Belongs to the universal ribosomal protein uL4 family. As to quaternary structure, part of the 50S ribosomal subunit.

One of the primary rRNA binding proteins, this protein initially binds near the 5'-end of the 23S rRNA. It is important during the early stages of 50S assembly. It makes multiple contacts with different domains of the 23S rRNA in the assembled 50S subunit and ribosome. Its function is as follows. Forms part of the polypeptide exit tunnel. In Xanthomonas axonopodis pv. citri (strain 306), this protein is Large ribosomal subunit protein uL4.